Consider the following 67-residue polypeptide: Conotoxin Cl6.7 (67 aa).

An N-terminal signal peptide occupies residues 1-24 (MKVTAVLMVAVLVLTACQLTTANT). Residues 25–39 (TDYVRRIPARKSTMS) constitute a propeptide that is removed on maturation. 3 disulfide bridges follow: Cys43–Cys58, Cys50–Cys62, and Cys57–Cys66.

Belongs to the conotoxin O1 superfamily. Expressed by the venom duct.

The protein resides in the secreted. This chain is Conotoxin Cl6.7, found in Californiconus californicus (California cone).